A 375-amino-acid chain; its full sequence is uncharacterized protein (375 aa).

One can recognise a GP-PDE domain in the interval 52–301 (VLLSAHRGSW…KQGFATYHES (250 aa)).

This is an uncharacterized protein from Sinorhizobium fredii (strain NBRC 101917 / NGR234).